The following is a 104-amino-acid chain: UPF0145 protein VIBHAR_02090 (104 aa).

Belongs to the UPF0145 family.

This chain is UPF0145 protein VIBHAR_02090, found in Vibrio campbellii (strain ATCC BAA-1116).